The primary structure comprises 186 residues: Myosin light chain 1, skeletal muscle isoform (186 aa).

M1 carries the blocked amino end (Met) modification. The disordered stretch occupies residues 1–26 (MPKAPAKKAEPAPAPAPAPEPAPAPA). The segment covering 12–26 (APAPAPAPEPAPAPA) has biased composition (pro residues). 2 EF-hand domains span residues 42–77 (DQIE…LGQN) and 119–154 (AGFE…LGEK).

In terms of assembly, myosin is a hexamer of 2 heavy chains and 4 light chains.

The protein is Myosin light chain 1, skeletal muscle isoform of Chelon ramada (Thin-lipped grey mullet).